The following is a 308-amino-acid chain: tRNA dimethylallyltransferase (308 aa).

Residue 14-21 coordinates ATP; sequence GPTASGKT. 16–21 is a binding site for substrate; that stretch reads TASGKT. Interaction with substrate tRNA regions lie at residues 39–42, 163–167, and 244–249; these read DSAL, QRLAR, and RCVGYR.

It belongs to the IPP transferase family. In terms of assembly, monomer. The cofactor is Mg(2+).

It catalyses the reaction adenosine(37) in tRNA + dimethylallyl diphosphate = N(6)-dimethylallyladenosine(37) in tRNA + diphosphate. Functionally, catalyzes the transfer of a dimethylallyl group onto the adenine at position 37 in tRNAs that read codons beginning with uridine, leading to the formation of N6-(dimethylallyl)adenosine (i(6)A). The sequence is that of tRNA dimethylallyltransferase from Shewanella halifaxensis (strain HAW-EB4).